The primary structure comprises 138 residues: ATP synthase epsilon chain (138 aa).

The protein belongs to the ATPase epsilon chain family. As to quaternary structure, F-type ATPases have 2 components, CF(1) - the catalytic core - and CF(0) - the membrane proton channel. CF(1) has five subunits: alpha(3), beta(3), gamma(1), delta(1), epsilon(1). CF(0) has three main subunits: a, b and c.

It is found in the cell inner membrane. Produces ATP from ADP in the presence of a proton gradient across the membrane. The protein is ATP synthase epsilon chain of Geotalea uraniireducens (strain Rf4) (Geobacter uraniireducens).